Consider the following 219-residue polypeptide: Protein-L-isoaspartate O-methyltransferase (219 aa).

Residue S64 is part of the active site.

It belongs to the methyltransferase superfamily. L-isoaspartyl/D-aspartyl protein methyltransferase family.

The protein localises to the cytoplasm. It catalyses the reaction [protein]-L-isoaspartate + S-adenosyl-L-methionine = [protein]-L-isoaspartate alpha-methyl ester + S-adenosyl-L-homocysteine. In terms of biological role, catalyzes the methyl esterification of L-isoaspartyl residues in peptides and proteins that result from spontaneous decomposition of normal L-aspartyl and L-asparaginyl residues. It plays a role in the repair and/or degradation of damaged proteins. The chain is Protein-L-isoaspartate O-methyltransferase from Chlorobaculum parvum (strain DSM 263 / NCIMB 8327) (Chlorobium vibrioforme subsp. thiosulfatophilum).